The primary structure comprises 249 residues: Putative [LysW]-aminoadipate/[LysW]-glutamate kinase (249 aa).

The substrate site is built by arginine 63 and asparagine 166.

This sequence belongs to the acetylglutamate kinase family. LysZ subfamily.

The protein resides in the cytoplasm. The catalysed reaction is [amino-group carrier protein]-C-terminal-N-(1,4-dicarboxybutan-1-yl)-L-glutamine + ATP = [amino-group carrier protein]-C-terminal-N-(1-carboxy-5-phosphooxy-5-oxopentan-1-yl)-L-glutamine + ADP. The enzyme catalyses [amino-group carrier protein]-C-terminal-gamma-(L-glutamyl)-L-glutamate + ATP = [amino-group carrier protein]-C-terminal-gamma-(5-phospho-L-glutamyl)-L-glutamate + ADP. Its pathway is amino-acid biosynthesis; L-lysine biosynthesis via AAA pathway; L-lysine from L-alpha-aminoadipate (Thermus route): step 2/5. The protein operates within amino-acid biosynthesis; L-arginine biosynthesis. Involved in both the arginine and lysine biosynthetic pathways. Phosphorylates the LysW-bound precursors glutamate (for arginine biosynthesis), respectively alpha-aminoadipate (for lysine biosynthesis). This Pyrococcus furiosus (strain ATCC 43587 / DSM 3638 / JCM 8422 / Vc1) protein is Putative [LysW]-aminoadipate/[LysW]-glutamate kinase.